A 571-amino-acid chain; its full sequence is Glutamate--tRNA ligase (571 aa).

The 'HIGH' region motif lies at 110-120 (PNPNGPGTLGS).

The protein belongs to the class-I aminoacyl-tRNA synthetase family. Glutamate--tRNA ligase type 2 subfamily.

It is found in the cytoplasm. The catalysed reaction is tRNA(Glu) + L-glutamate + ATP = L-glutamyl-tRNA(Glu) + AMP + diphosphate. Functionally, catalyzes the attachment of glutamate to tRNA(Glu) in a two-step reaction: glutamate is first activated by ATP to form Glu-AMP and then transferred to the acceptor end of tRNA(Glu). In Methanosarcina acetivorans (strain ATCC 35395 / DSM 2834 / JCM 12185 / C2A), this protein is Glutamate--tRNA ligase.